The primary structure comprises 277 residues: Glutamate racemase (277 aa).

Substrate is bound by residues 13-14 (DS) and 45-46 (YG). Cysteine 76 functions as the Proton donor/acceptor in the catalytic mechanism. 77–78 (NT) is a binding site for substrate. Cysteine 186 acts as the Proton donor/acceptor in catalysis. Substrate is bound at residue 187–188 (TH).

It belongs to the aspartate/glutamate racemases family.

It carries out the reaction L-glutamate = D-glutamate. The protein operates within cell wall biogenesis; peptidoglycan biosynthesis. Provides the (R)-glutamate required for cell wall biosynthesis. This Ralstonia nicotianae (strain ATCC BAA-1114 / GMI1000) (Ralstonia solanacearum) protein is Glutamate racemase.